The primary structure comprises 351 residues: Cytoplasmic dynein 2 light intermediate chain 1 (351 aa).

The disordered stretch occupies residues 304–335; it reads TLKAIQDPARDPQYAESEVDEMRVQKDQELEQ. A compositionally biased stretch (basic and acidic residues) spans 323-335; it reads DEMRVQKDQELEQ.

It belongs to the dynein light intermediate chain family. As to quaternary structure, light intermediate chain of the cytoplasmic dynein complex 2, a multisubunit complex composed at least of eleven different proteins. The cytoplasmic dynein 2 complex consists of two catalytic heavy chains (HCs) and a number of non-catalytic subunits presented by intermediate chains (ICs), light intermediate chains (LICs) and light chains (LCs). Among them, a heavy chain (DYNC2H1), two intermediate chains (DYNC2I2 and DYNC2I1), a light intermediate chain (DYNC2LI1), and a light chain (DYNLT2B) are unique to the dynein-2 complex, but a subset of light chains are also shared by dynein-1 and dynein-2 complexes. Dynein-2 complex is built around two copies of cytoplasmic dynein 2 heavy chain 1 (DYNC2H1). The C-terminal region forms the motor domain, which converts the energy from ATP hydrolysis into movement. Its N-terminal region forms the tail, an extended structure that binds the other subunits and holds the two heavy chains in a homodimer. Interacts with DYNC2H1 (via N-terminus); this interaction stabilizes the dynein-2 complex structure.

It is found in the cytoplasm. The protein localises to the cell projection. Its subcellular location is the cilium. It localises to the cytoskeleton. The protein resides in the cilium basal body. It is found in the cilium axoneme. The protein localises to the microtubule organizing center. Its subcellular location is the centrosome. Its function is as follows. Acts as one of several non-catalytic accessory components of the cytoplasmic dynein 2 complex (dynein-2 complex), a motor protein complex that drives the movement of cargos along microtubules within cilia and flagella in concert with the intraflagellar transport (IFT) system, facilitating the assembly of these organelles. Involved in the regulation of ciliary length. This Rattus norvegicus (Rat) protein is Cytoplasmic dynein 2 light intermediate chain 1 (Dync2li1).